The chain runs to 79 residues: MAEFKEQVLDILEEVCENDIVKENLDVQLFEEGILDSFAVVSLLVEFQERLDIEVSISDFDRDEWATPNMVIKKLEEIR.

Positions 2–79 constitute a Carrier domain; it reads AEFKEQVLDI…MVIKKLEEIR (78 aa). An O-(pantetheine 4'-phosphoryl)serine modification is found at Ser37.

Belongs to the DltC family. Post-translationally, 4'-phosphopantetheine is transferred from CoA to a specific serine of apo-DCP.

Its subcellular location is the cytoplasm. Its pathway is cell wall biogenesis; lipoteichoic acid biosynthesis. Its function is as follows. Carrier protein involved in the D-alanylation of lipoteichoic acid (LTA). The loading of thioester-linked D-alanine onto DltC is catalyzed by D-alanine--D-alanyl carrier protein ligase DltA. The DltC-carried D-alanyl group is further transferred to cell membrane phosphatidylglycerol (PG) by forming an ester bond, probably catalyzed by DltD. D-alanylation of LTA plays an important role in modulating the properties of the cell wall in Gram-positive bacteria, influencing the net charge of the cell wall. This Bacillus anthracis (strain CDC 684 / NRRL 3495) protein is D-alanyl carrier protein.